The sequence spans 113 residues: Flagellar transcriptional regulator FlhD (113 aa).

The protein belongs to the FlhD family. As to quaternary structure, homodimer; disulfide-linked. Forms a heterohexamer composed of two FlhC and four FlhD subunits. Each FlhC binds a FlhD dimer, forming a heterotrimer, and a hexamer assembles by dimerization of two heterotrimers.

It localises to the cytoplasm. In terms of biological role, functions in complex with FlhC as a master transcriptional regulator that regulates transcription of several flagellar and non-flagellar operons by binding to their promoter region. Activates expression of class 2 flagellar genes, including fliA, which is a flagellum-specific sigma factor that turns on the class 3 genes. Also regulates genes whose products function in a variety of physiological pathways. This Salmonella typhi protein is Flagellar transcriptional regulator FlhD.